We begin with the raw amino-acid sequence, 255 residues long: 2,3-dehydroadipyl-CoA hydratase (255 aa).

The protein belongs to the enoyl-CoA hydratase/isomerase family.

It carries out the reaction a (3S)-3-hydroxyacyl-CoA = a (2E)-enoyl-CoA + H2O. The enzyme catalyses a 4-saturated-(3S)-3-hydroxyacyl-CoA = a (3E)-enoyl-CoA + H2O. Its pathway is aromatic compound metabolism; phenylacetate degradation. Its function is as follows. Catalyzes the reversible conversion of enzymatically produced 2,3-dehydroadipyl-CoA into 3-hydroxyadipyl-CoA. The chain is 2,3-dehydroadipyl-CoA hydratase (paaF) from Escherichia coli (strain K12).